The chain runs to 133 residues: Small ribosomal subunit protein uS9 (133 aa).

Basic and acidic residues predominate over residues 97 to 113 (SKQELKSHGFLTRDPRK). The disordered stretch occupies residues 97–133 (SKQELKSHGFLTRDPRKKERKKYGHKKARKSFQFSKR). The span at 114–133 (KERKKYGHKKARKSFQFSKR) shows a compositional bias: basic residues.

The protein belongs to the universal ribosomal protein uS9 family.

In Chlamydia abortus (strain DSM 27085 / S26/3) (Chlamydophila abortus), this protein is Small ribosomal subunit protein uS9.